Consider the following 107-residue polypeptide: Cell division protein FtsB (107 aa).

The Cytoplasmic segment spans residues methionine 1 to lysine 3. Residues leucine 4–leucine 21 form a helical membrane-spanning segment. At glycine 22 to glutamine 107 the chain is on the periplasmic side. Residues glutamine 39–glycine 62 are a coiled coil.

This sequence belongs to the FtsB family. In terms of assembly, part of a complex composed of FtsB, FtsL and FtsQ.

The protein localises to the cell inner membrane. Essential cell division protein. May link together the upstream cell division proteins, which are predominantly cytoplasmic, with the downstream cell division proteins, which are predominantly periplasmic. This Yersinia enterocolitica serotype O:8 / biotype 1B (strain NCTC 13174 / 8081) protein is Cell division protein FtsB.